A 197-amino-acid chain; its full sequence is Ribonuclease HII (197 aa).

The 184-residue stretch at 14–197 (EKIVGIDEAG…RSFNLGVNDD (184 aa)) folds into the RNase H type-2 domain. A divalent metal cation-binding residues include Asp-20, Glu-21, and Asp-112.

The protein belongs to the RNase HII family. Mn(2+) is required as a cofactor. Mg(2+) serves as cofactor.

Its subcellular location is the cytoplasm. It carries out the reaction Endonucleolytic cleavage to 5'-phosphomonoester.. Endonuclease that specifically degrades the RNA of RNA-DNA hybrids. This Sulfurihydrogenibium sp. (strain YO3AOP1) protein is Ribonuclease HII.